We begin with the raw amino-acid sequence, 396 residues long: Stearoyl-[acyl-carrier-protein] 9-desaturase, chloroplastic (396 aa).

The transit peptide at 1-32 directs the protein to the chloroplast; sequence MALKLNPVTTFPSTRSLNNFSSRSPRTFLMAA. Residues Glu138, Glu176, His179, Glu229, Glu262, and His265 each contribute to the Fe cation site.

This sequence belongs to the fatty acid desaturase type 2 family. In terms of assembly, homodimer. Requires Fe(2+) as cofactor.

It is found in the plastid. The protein localises to the chloroplast. It catalyses the reaction octadecanoyl-[ACP] + 2 reduced [2Fe-2S]-[ferredoxin] + O2 + 2 H(+) = (9Z)-octadecenoyl-[ACP] + 2 oxidized [2Fe-2S]-[ferredoxin] + 2 H2O. Its pathway is lipid metabolism; fatty acid metabolism. Functionally, converts stearoyl-ACP to oleoyl-ACP by introduction of a cis double bond between carbons 9 and 10 of the acyl chain. This chain is Stearoyl-[acyl-carrier-protein] 9-desaturase, chloroplastic, found in Linum usitatissimum (Flax).